Consider the following 206-residue polypeptide: Small ribosomal subunit protein uS4 (206 aa).

In terms of domain architecture, S4 RNA-binding spans 96 to 156 (TRLDNVVYRM…EKSKKQARII (61 aa)).

This sequence belongs to the universal ribosomal protein uS4 family. Part of the 30S ribosomal subunit. Contacts protein S5. The interaction surface between S4 and S5 is involved in control of translational fidelity.

Its function is as follows. One of the primary rRNA binding proteins, it binds directly to 16S rRNA where it nucleates assembly of the body of the 30S subunit. With S5 and S12 plays an important role in translational accuracy. The polypeptide is Small ribosomal subunit protein uS4 (Shewanella woodyi (strain ATCC 51908 / MS32)).